The primary structure comprises 252 residues: Chitooligosaccharide deacetylase (252 aa).

Mg(2+) is bound by residues His61 and His125.

The protein belongs to the YdjC deacetylase family. ChbG subfamily. Homodimer. Mg(2+) serves as cofactor.

The protein resides in the cytoplasm. It carries out the reaction N,N'-diacetylchitobiose + H2O = N-acetyl-beta-D-glucosaminyl-(1-&gt;4)-D-glucosamine + acetate. The enzyme catalyses diacetylchitobiose-6'-phosphate + H2O = N'-monoacetylchitobiose-6'-phosphate + acetate. The protein operates within glycan degradation; chitin degradation. Its function is as follows. Involved in the degradation of chitin. ChbG is essential for growth on the acetylated chitooligosaccharides chitobiose and chitotriose but is dispensable for growth on cellobiose and chitosan dimer, the deacetylated form of chitobiose. Deacetylation of chitobiose-6-P and chitotriose-6-P is necessary for both the activation of the chb promoter by the regulatory protein ChbR and the hydrolysis of phosphorylated beta-glucosides by the phospho-beta-glucosidase ChbF. Catalyzes the removal of only one acetyl group from chitobiose-6-P to yield monoacetylchitobiose-6-P, the inducer of ChbR and the substrate of ChbF. In Salmonella typhi, this protein is Chitooligosaccharide deacetylase.